The following is a 431-amino-acid chain: Probable ganciclovir kinase (431 aa).

One can recognise a Protein kinase domain in the interval 79–368; the sequence is PQEDAVLGSG…KLSIGIDSFG (290 aa). Residues 85 to 93 and lysine 103 each bind ATP; that span reads LGSGSFGSV. Catalysis depends on aspartate 195, which acts as the Proton acceptor.

Belongs to the protein kinase superfamily. Tyr protein kinase family. HCMV ganciclovir subfamily.

Phosphorylates the antiviral nucleoside analog ganciclovir. This is Probable ganciclovir kinase (36) from Saimiriine herpesvirus 2 (strain 11) (SaHV-2).